Here is a 154-residue protein sequence, read N- to C-terminus: Peptide deformylase (154 aa).

2 residues coordinate Fe cation: C90 and H132. The active site involves E133. H136 serves as a coordination point for Fe cation.

Belongs to the polypeptide deformylase family. Fe(2+) is required as a cofactor.

The enzyme catalyses N-terminal N-formyl-L-methionyl-[peptide] + H2O = N-terminal L-methionyl-[peptide] + formate. Functionally, removes the formyl group from the N-terminal Met of newly synthesized proteins. Requires at least a dipeptide for an efficient rate of reaction. N-terminal L-methionine is a prerequisite for activity but the enzyme has broad specificity at other positions. The sequence is that of Peptide deformylase from Desulforudis audaxviator (strain MP104C).